Consider the following 794-residue polypeptide: ATP-dependent RNA helicase SUPV3L1, mitochondrial (794 aa).

The N-terminal 30 residues, 1 to 30 (MRRCAWPLLRLSSRVGLALRHGGAVRLRQA), are a transit peptide targeting the mitochondrion. The region spanning 182–322 (EARAIQRKII…AIDLVTELMY (141 aa)) is the Helicase ATP-binding domain. 195-202 (GPTNSGKT) is an ATP binding site. Residues 341–506 (VLDYALESLD…GLHPTPEQIE (166 aa)) form the Helicase C-terminal domain. Disordered regions lie at residues 678–741 (EVMS…HGRG) and 764–794 (EWQDQHRSGRYGLASKRNDQSSSKEMGKKKK). The segment covering 689-704 (TKRDARTVSDHRDAKS) has biased composition (basic and acidic residues).

The protein belongs to the helicase family. Mg(2+) serves as cofactor. It depends on Mn(2+) as a cofactor.

It is found in the nucleus. It localises to the mitochondrion matrix. Its subcellular location is the mitochondrion nucleoid. The catalysed reaction is ATP + H2O = ADP + phosphate + H(+). Functionally, major helicase player in mitochondrial RNA metabolism. Component of the mitochondrial degradosome (mtEXO) complex, that degrades 3' overhang double-stranded RNA with a 3'-to-5' directionality in an ATP-dependent manner. ATPase and ATP-dependent multisubstrate helicase, able to unwind double-stranded (ds) DNA and RNA, and RNA/DNA heteroduplexes in the 5'-to-3' direction. Plays a role in the RNA surveillance system in mitochondria; regulates the stability of mature mRNAs, the removal of aberrantly formed mRNAs and the rapid degradation of non coding processing intermediates. Also implicated in recombination and chromatin maintenance pathways. May protect cells from apoptosis. Associates with mitochondrial DNA. The protein is ATP-dependent RNA helicase SUPV3L1, mitochondrial (SUPV3L1) of Gallus gallus (Chicken).